The sequence spans 469 residues: Protein nucleotidyltransferase YdiU (469 aa).

Gly80, Gly82, Arg83, Lys103, Asp115, Gly116, Arg166, and Arg173 together coordinate ATP. Asp243 acts as the Proton acceptor in catalysis. Mg(2+) is bound by residues Asn244 and Asp253. ATP is bound at residue Asp253.

Belongs to the SELO family. The cofactor is Mg(2+). Mn(2+) serves as cofactor.

It catalyses the reaction L-seryl-[protein] + ATP = 3-O-(5'-adenylyl)-L-seryl-[protein] + diphosphate. It carries out the reaction L-threonyl-[protein] + ATP = 3-O-(5'-adenylyl)-L-threonyl-[protein] + diphosphate. The catalysed reaction is L-tyrosyl-[protein] + ATP = O-(5'-adenylyl)-L-tyrosyl-[protein] + diphosphate. The enzyme catalyses L-histidyl-[protein] + UTP = N(tele)-(5'-uridylyl)-L-histidyl-[protein] + diphosphate. It catalyses the reaction L-seryl-[protein] + UTP = O-(5'-uridylyl)-L-seryl-[protein] + diphosphate. It carries out the reaction L-tyrosyl-[protein] + UTP = O-(5'-uridylyl)-L-tyrosyl-[protein] + diphosphate. Its function is as follows. Nucleotidyltransferase involved in the post-translational modification of proteins. It can catalyze the addition of adenosine monophosphate (AMP) or uridine monophosphate (UMP) to a protein, resulting in modifications known as AMPylation and UMPylation. The protein is Protein nucleotidyltransferase YdiU of Pseudoalteromonas translucida (strain TAC 125).